Reading from the N-terminus, the 323-residue chain is tRNA dimethylallyltransferase (323 aa).

12 to 19 (GPTAAGKT) lines the ATP pocket. 14–19 (TAAGKT) contacts substrate. 2 interaction with substrate tRNA regions span residues 37–40 (DSAL) and 161–165 (QRLIR).

It belongs to the IPP transferase family. In terms of assembly, monomer. It depends on Mg(2+) as a cofactor.

It carries out the reaction adenosine(37) in tRNA + dimethylallyl diphosphate = N(6)-dimethylallyladenosine(37) in tRNA + diphosphate. Catalyzes the transfer of a dimethylallyl group onto the adenine at position 37 in tRNAs that read codons beginning with uridine, leading to the formation of N6-(dimethylallyl)adenosine (i(6)A). The polypeptide is tRNA dimethylallyltransferase (Pseudomonas putida (strain ATCC 700007 / DSM 6899 / JCM 31910 / BCRC 17059 / LMG 24140 / F1)).